The following is a 393-amino-acid chain: Squamosa promoter-binding-like protein 17 (393 aa).

Residues Ala-40–Ser-49 show a composition bias toward low complexity. The disordered stretch occupies residues Ala-40–Pro-67. The SBP-type zinc-finger motif lies at Pro-71 to Pro-148. The Zn(2+) site is built by Cys-74, Cys-79, Cys-96, His-99, Cys-115, Cys-118, His-122, and Cys-134. The Bipartite nuclear localization signal motif lies at Lys-131–Lys-147. Basic residues predominate over residues Arg-137–Pro-148. Disordered stretches follow at residues Arg-137–Gly-158, Trp-273–Pro-301, and Gly-317–Leu-393. Polar residues-rich tracts occupy residues Trp-273 to Ser-293 and Gly-380 to Leu-393.

Expressed in young panicles.

The protein resides in the nucleus. In terms of biological role, trans-acting factor that binds specifically to the consensus nucleotide sequence 5'-TNCGTACAA-3'. May be involved in panicle development. The chain is Squamosa promoter-binding-like protein 17 (SPL17) from Oryza sativa subsp. japonica (Rice).